Reading from the N-terminus, the 70-residue chain is Small ribosomal subunit protein bS21 (70 aa).

Residues 40–70 (KPTAERKRKHAAAVKRHYKRIRSQQLPPRLY) form a disordered region. The span at 45-61 (RKRKHAAAVKRHYKRIR) shows a compositional bias: basic residues.

It belongs to the bacterial ribosomal protein bS21 family.

The polypeptide is Small ribosomal subunit protein bS21 (Bordetella parapertussis (strain 12822 / ATCC BAA-587 / NCTC 13253)).